Here is a 190-residue protein sequence, read N- to C-terminus: Voltage-dependent calcium channel gamma-like subunit (190 aa).

The next 4 membrane-spanning stretches (helical) occupy residues 25–45, 96–116, 131–151, and 155–175; these read FIRT…SVSI, ALAV…QLCE, LLVS…LLRN, and LIGF…LFLN.

It belongs to the PMP-22/EMP/MP20 family. CACNG subfamily. In terms of assembly, the L-type calcium channel is composed of five subunits: alpha-1, alpha-2/delta, beta and gamma.

The protein resides in the membrane. Functionally, thought to stabilize the calcium channel in an inactivated (closed) state. Modulates calcium current when coexpressed with CACNA1G. This chain is Voltage-dependent calcium channel gamma-like subunit, found in Homo sapiens (Human).